Consider the following 96-residue polypeptide: Antitoxin ParD4 (96 aa).

This sequence belongs to the ParD antitoxin family.

In terms of biological role, antitoxin component of a type II toxin-antitoxin (TA) system. Neutralizes the effect of cognate toxin ParE4, but no other RelE or ParE toxin. This is Antitoxin ParD4 (parD4) from Caulobacter vibrioides (strain ATCC 19089 / CIP 103742 / CB 15) (Caulobacter crescentus).